We begin with the raw amino-acid sequence, 302 residues long: Probable alpha-L-glutamate ligase (302 aa).

Residues 112–294 (LQLLLKTGVP…IAAEIIDYIE (183 aa)) form the ATP-grasp domain. ATP-binding positions include lysine 148, 185–186 (DF), aspartate 194, and 218–220 (RAN). 3 residues coordinate Mg(2+): aspartate 255, glutamate 267, and asparagine 269. The Mn(2+) site is built by aspartate 255, glutamate 267, and asparagine 269.

This sequence belongs to the RimK family. It depends on Mg(2+) as a cofactor. Mn(2+) serves as cofactor.

The chain is Probable alpha-L-glutamate ligase from Haemophilus influenzae (strain 86-028NP).